A 241-amino-acid polypeptide reads, in one-letter code: tRNA pseudouridine synthase B (241 aa).

Catalysis depends on D45, which acts as the Nucleophile.

Belongs to the pseudouridine synthase TruB family. Type 1 subfamily.

The catalysed reaction is uridine(55) in tRNA = pseudouridine(55) in tRNA. Its function is as follows. Responsible for synthesis of pseudouridine from uracil-55 in the psi GC loop of transfer RNAs. The chain is tRNA pseudouridine synthase B from Opitutus terrae (strain DSM 11246 / JCM 15787 / PB90-1).